The chain runs to 125 residues: Large ribosomal subunit protein uL22c (125 aa).

It belongs to the universal ribosomal protein uL22 family. Part of the 50S ribosomal subunit.

The protein localises to the plastid. It is found in the chloroplast. Functionally, this protein binds specifically to 23S rRNA. The globular domain of the protein is located near the polypeptide exit tunnel on the outside of the subunit, while an extended beta-hairpin is found that lines the wall of the exit tunnel in the center of the 70S ribosome. This Nuphar advena (Common spatterdock) protein is Large ribosomal subunit protein uL22c (rpl22).